A 258-amino-acid polypeptide reads, in one-letter code: UPF0246 protein Sden_2729 (258 aa).

The protein belongs to the UPF0246 family.

The protein is UPF0246 protein Sden_2729 of Shewanella denitrificans (strain OS217 / ATCC BAA-1090 / DSM 15013).